Reading from the N-terminus, the 698-residue chain is Dual trans-enoyl reductase/FAD-dependent monooxygenase tazHJ (698 aa).

Residues 54 to 57 (STAT), 78 to 81 (SPRH), tyrosine 96, and 279 to 280 (IA) contribute to the NADP(+) site. Residues glutamate 299, glycine 312, and arginine 372 each contribute to the FAD site. Residue arginine 455 is part of the active site. 2 residues coordinate FAD: aspartate 571 and alanine 584.

It in the N-terminal section; belongs to the zinc-containing alcohol dehydrogenase family. This sequence in the C-terminal section; belongs to the paxM FAD-dependent monooxygenase family.

The protein operates within secondary metabolite biosynthesis. Its function is as follows. Dual trans-enoyl reductase/FAD-dependent monooxygenase; part of the gene cluster that mediates the biosynthesis of azaterrilone A and other azaphilones, a class of fungal metabolites characterized by a highly oxygenated pyrano-quinone bicyclic core and exhibiting a broad range of bioactivities. The first step of the pathway begins with the non-reducing polyketide synthase tazA that assembles one acetyl-CoA starter unit, five malonyl-CoA units, and catalyzes a series of Claisen condensations, methylation, PT-mediated cyclization, and finally releases the first hexaketide precursor through the R-domain. The tazA product then undergoes reduction on its terminal ketone and the following pyran-ring formation by yet undetermined enzyme(s). Dehydration and enoyl reduction, possibly involving the trans-enoyl reductase tazE leads to the next intermediate. TazD is predicted as an acetyltransferase and might catalyze the acetylation steps leading to the synthesis of azaterrilone A. Azaterrilone A is not the final product of the taz pathway and both the highly reducing polyketide synthase tazB and the dual enzyme tazHJ catalyze late steps of the pathway, leading to the production of the 2 final stereoisomers that contain additional polyketide modification whose structures have still to be determined. This chain is Dual trans-enoyl reductase/FAD-dependent monooxygenase tazHJ, found in Aspergillus terreus (strain NIH 2624 / FGSC A1156).